The chain runs to 20 residues: Kassinatuerin-2 (20 aa).

Residue isoleucine 20 is modified to Isoleucine amide.

In terms of tissue distribution, expressed by the skin dorsal glands.

The protein localises to the secreted. Its function is as follows. Has no antimicrobial activities against bacteria (E.coli and S.aureus) nor against the fungus C.albicans. In Kassina senegalensis (Senegal running frog), this protein is Kassinatuerin-2.